A 728-amino-acid chain; its full sequence is Catalase-peroxidase (728 aa).

Positions 1–16 (MDNPTDSAGKCPVAHG) are cleaved as a signal peptide. A disordered region spans residues 1 to 26 (MDNPTDSAGKCPVAHGNTPRSRSNRD). A cross-link (tryptophyl-tyrosyl-methioninium (Trp-Tyr) (with M-244)) is located at residues 96–218 (WHSAGTYRIT…LGAVQMGFIY (123 aa)). Residue His97 is the Proton acceptor of the active site. The segment at residues 218 to 244 (YVNPEGPNGNSDPLASARDIRETFARM) is a cross-link (tryptophyl-tyrosyl-methioninium (Tyr-Met) (with W-96)). Position 259 (His259) interacts with heme b.

It belongs to the peroxidase family. Peroxidase/catalase subfamily. Homodimer or homotetramer. The cofactor is heme b. Post-translationally, formation of the three residue Trp-Tyr-Met cross-link is important for the catalase, but not the peroxidase activity of the enzyme.

It catalyses the reaction H2O2 + AH2 = A + 2 H2O. It carries out the reaction 2 H2O2 = O2 + 2 H2O. In terms of biological role, bifunctional enzyme with both catalase and broad-spectrum peroxidase activity. In Rhizobium leguminosarum bv. phaseoli, this protein is Catalase-peroxidase.